A 373-amino-acid polypeptide reads, in one-letter code: Peptide chain release factor 2 (373 aa).

N5-methylglutamine is present on Gln251.

Belongs to the prokaryotic/mitochondrial release factor family. Post-translationally, methylated by PrmC. Methylation increases the termination efficiency of RF2.

The protein localises to the cytoplasm. In terms of biological role, peptide chain release factor 2 directs the termination of translation in response to the peptide chain termination codons UGA and UAA. The sequence is that of Peptide chain release factor 2 from Salinispora tropica (strain ATCC BAA-916 / DSM 44818 / JCM 13857 / NBRC 105044 / CNB-440).